A 172-amino-acid chain; its full sequence is Large ribosomal subunit protein uL10 (172 aa).

It belongs to the universal ribosomal protein uL10 family. As to quaternary structure, part of the ribosomal stalk of the 50S ribosomal subunit. The N-terminus interacts with L11 and the large rRNA to form the base of the stalk. The C-terminus forms an elongated spine to which L12 dimers bind in a sequential fashion forming a multimeric L10(L12)X complex.

Forms part of the ribosomal stalk, playing a central role in the interaction of the ribosome with GTP-bound translation factors. This is Large ribosomal subunit protein uL10 from Ruegeria sp. (strain TM1040) (Silicibacter sp.).